The chain runs to 315 residues: Inosine-uridine preferring nucleoside hydrolase (315 aa).

Asp-10 lines the Ca(2+) pocket. Asp-14 lines the substrate pocket. Residues Asp-15 and Thr-126 each coordinate Ca(2+). Residues Asn-160, Glu-166, and Asn-168 each contribute to the substrate site. The active-site Proton donor is His-241. Asp-242 contacts Ca(2+).

Homotetramer. It depends on Ca(2+) as a cofactor.

It catalyses the reaction inosine + H2O = hypoxanthine + D-ribose. The catalysed reaction is uridine + H2O = D-ribose + uracil. It participates in purine metabolism; purine nucleoside salvage. Its function is as follows. Catalyzes the hydrolysis of the N-glycosidic bond of commonly occurring purine and pyrimidine nucleosides into ribose and the base, but has a preference for inosine and uridine as substrates. Is not active on thymidine and 2'-deoxynucleosides. Functions in purine salvage from the blood of the host, a fundamental pathway since protozoan parasites such as C.fasciculata are incapable of de novo purine biosynthesis. The sequence is that of Inosine-uridine preferring nucleoside hydrolase (IUNH) from Crithidia fasciculata.